The primary structure comprises 207 residues: Inner membrane-spanning protein YciB (207 aa).

Helical transmembrane passes span 3–23 (FLFD…AEGQ), 51–71 (VLLA…WLLL), 78–98 (TMLW…VWFH), 105–125 (WKPS…HAVF), 150–170 (FMWI…AYSF), and 178–198 (FKLF…GLYL).

This sequence belongs to the YciB family.

It localises to the cell inner membrane. In terms of biological role, plays a role in cell envelope biogenesis, maintenance of cell envelope integrity and membrane homeostasis. This Methylibium petroleiphilum (strain ATCC BAA-1232 / LMG 22953 / PM1) protein is Inner membrane-spanning protein YciB.